Here is a 215-residue protein sequence, read N- to C-terminus: Ribosomal RNA small subunit methyltransferase G (215 aa).

S-adenosyl-L-methionine-binding positions include Gly77, Phe82, 130–131 (IE), and Arg146.

This sequence belongs to the methyltransferase superfamily. RNA methyltransferase RsmG family.

The protein localises to the cytoplasm. It carries out the reaction guanosine(527) in 16S rRNA + S-adenosyl-L-methionine = N(7)-methylguanosine(527) in 16S rRNA + S-adenosyl-L-homocysteine. Its function is as follows. Specifically methylates the N7 position of guanine in position 527 of 16S rRNA. The sequence is that of Ribosomal RNA small subunit methyltransferase G from Bartonella bacilliformis (strain ATCC 35685 / KC583 / Herrer 020/F12,63).